Reading from the N-terminus, the 336-residue chain is MAVKVGINGFGRIGRNVFRAAVKNPDIEVVAVNDLTANADGLAHLLKYDSVHGRLDAEVVVNDGVSVNGKEIIVKAERNPENLAWGEIGVDIVVESTGRFTKREDAAKHLEAGAKKVIISAPAKVENITVVMGVNQDKYDADAHHVISNASCTTICLAAFARVLHQIFGEVSRMMTTAHSYTNIQRILDAATHADLRGARAAAESIIDTTNGAAMAVALVLPELKGKLNGMAMRVATANVSVVDLVYELAKEVTVEEVNAALKAIAEGELKGILAYSIEPLVIRNYNGSTVSSTIDILSTMVIDGAMVKVVSWYDNETGYSHRVVALAAYINAKGL.

NAD(+)-binding positions include 12 to 13 (RI), Asp-34, Arg-78, and Ser-120. Residues 151 to 153 (SCT) and Thr-182 each bind D-glyceraldehyde 3-phosphate. Cys-152 (nucleophile) is an active-site residue. Asn-183 lines the NAD(+) pocket. D-glyceraldehyde 3-phosphate contacts are provided by residues 211–212 (NG) and Arg-234. Residue Asn-316 participates in NAD(+) binding.

Belongs to the glyceraldehyde-3-phosphate dehydrogenase family. In terms of assembly, homotetramer.

It is found in the cytoplasm. The catalysed reaction is D-glyceraldehyde 3-phosphate + phosphate + NAD(+) = (2R)-3-phospho-glyceroyl phosphate + NADH + H(+). It participates in carbohydrate degradation; glycolysis; pyruvate from D-glyceraldehyde 3-phosphate: step 1/5. Its function is as follows. Catalyzes the oxidative phosphorylation of glyceraldehyde 3-phosphate (G3P) to 1,3-bisphosphoglycerate (BPG) using the cofactor NAD. The first reaction step involves the formation of a hemiacetal intermediate between G3P and a cysteine residue, and this hemiacetal intermediate is then oxidized to a thioester, with concomitant reduction of NAD to NADH. The reduced NADH is then exchanged with the second NAD, and the thioester is attacked by a nucleophilic inorganic phosphate to produce BPG. The protein is Glyceraldehyde-3-phosphate dehydrogenase (gap) of Heyndrickxia coagulans (Weizmannia coagulans).